Consider the following 336-residue polypeptide: DNA-directed RNA polymerase subunit alpha (336 aa).

An alpha N-terminal domain (alpha-NTD) region spans residues 1–226 (MLIAQRPTLS…ELFGLARELN (226 aa)). An alpha C-terminal domain (alpha-CTD) region spans residues 241–336 (AALAADMALP…DDAAFSDDEL (96 aa)).

Belongs to the RNA polymerase alpha chain family. Homodimer. The RNAP catalytic core consists of 2 alpha, 1 beta, 1 beta' and 1 omega subunit. When a sigma factor is associated with the core the holoenzyme is formed, which can initiate transcription.

The enzyme catalyses RNA(n) + a ribonucleoside 5'-triphosphate = RNA(n+1) + diphosphate. Its function is as follows. DNA-dependent RNA polymerase catalyzes the transcription of DNA into RNA using the four ribonucleoside triphosphates as substrates. This chain is DNA-directed RNA polymerase subunit alpha, found in Arthrobacter sp. (strain FB24).